A 549-amino-acid chain; its full sequence is Lipase 3 (549 aa).

A signal peptide spans 1 to 15; it reads MKLALALSLIASVAA. Residues C75 and C112 are joined by a disulfide bond. Catalysis depends on S224, which acts as the Acyl-ester intermediate. C283 and C292 are joined by a disulfide. N329 is a glycosylation site (N-linked (GlcNAc...) asparagine). Residue E356 is the Charge relay system of the active site. N366 carries N-linked (GlcNAc...) asparagine glycosylation. The active-site Charge relay system is the H464.

This sequence belongs to the type-B carboxylesterase/lipase family. As to quaternary structure, monomer and homodimer.

The enzyme catalyses a triacylglycerol + H2O = a diacylglycerol + a fatty acid + H(+). The chain is Lipase 3 (LIP3) from Diutina rugosa (Yeast).